Consider the following 231-residue polypeptide: uncharacterized protein (231 aa).

The protein belongs to the DnaA family. HdA subfamily.

This is an uncharacterized protein from Haemophilus influenzae (strain ATCC 51907 / DSM 11121 / KW20 / Rd).